We begin with the raw amino-acid sequence, 194 residues long: Inosine triphosphate pyrophosphatase (194 aa).

An ITP-binding site is contributed by 11 to 16; the sequence is TGNAKK. Glu-39 is a binding site for Mg(2+). Residues Lys-51, 67–68, Lys-84, 143–146, Lys-166, and 171–172 contribute to the ITP site; these read DT, FGWD, and HR.

The protein belongs to the HAM1 NTPase family. Homodimer. The cofactor is Mg(2+). Mn(2+) is required as a cofactor.

The protein localises to the cytoplasm. The catalysed reaction is ITP + H2O = IMP + diphosphate + H(+). It catalyses the reaction dITP + H2O = dIMP + diphosphate + H(+). It carries out the reaction XTP + H2O = XMP + diphosphate + H(+). In terms of biological role, pyrophosphatase that hydrolyzes non-canonical purine nucleotides such as inosine triphosphate (ITP), deoxyinosine triphosphate (dITP) or xanthosine 5'-triphosphate (XTP) to their respective monophosphate derivatives. The enzyme does not distinguish between the deoxy- and ribose forms. Probably excludes non-canonical purines from RNA and DNA precursor pools, thus preventing their incorporation into RNA and DNA and avoiding chromosomal lesions. This Dictyostelium discoideum (Social amoeba) protein is Inosine triphosphate pyrophosphatase (itpa).